We begin with the raw amino-acid sequence, 476 residues long: Aspartyl/glutamyl-tRNA(Asn/Gln) amidotransferase subunit B (476 aa).

The protein belongs to the GatB/GatE family. GatB subfamily. Heterotrimer of A, B and C subunits.

It carries out the reaction L-glutamyl-tRNA(Gln) + L-glutamine + ATP + H2O = L-glutaminyl-tRNA(Gln) + L-glutamate + ADP + phosphate + H(+). The enzyme catalyses L-aspartyl-tRNA(Asn) + L-glutamine + ATP + H2O = L-asparaginyl-tRNA(Asn) + L-glutamate + ADP + phosphate + 2 H(+). In terms of biological role, allows the formation of correctly charged Asn-tRNA(Asn) or Gln-tRNA(Gln) through the transamidation of misacylated Asp-tRNA(Asn) or Glu-tRNA(Gln) in organisms which lack either or both of asparaginyl-tRNA or glutaminyl-tRNA synthetases. The reaction takes place in the presence of glutamine and ATP through an activated phospho-Asp-tRNA(Asn) or phospho-Glu-tRNA(Gln). This Nitratidesulfovibrio vulgaris (strain ATCC 29579 / DSM 644 / CCUG 34227 / NCIMB 8303 / VKM B-1760 / Hildenborough) (Desulfovibrio vulgaris) protein is Aspartyl/glutamyl-tRNA(Asn/Gln) amidotransferase subunit B.